Reading from the N-terminus, the 446-residue chain is Baeyer-Villiger monooxygenase dmxR6 (446 aa).

The protein belongs to the AflY oxidoreductase family.

Its pathway is secondary metabolite biosynthesis. Baeyer-Villiger monooxygenase; part of the gene cluster that mediates the biosynthesis of the dimeric xanthones cryptosporioptides. The pathway begins with the synthesis of atrochrysone thioester by the polyketide synthase dmx-nrPKS. The atrochrysone carboxyl ACP thioesterase dmxR1 then breaks the thioester bond and releases the atrochrysone carboxylic acid from dmx-nrPKS. Atrochrysone carboxylic acid is decarboxylated by the decarboxylase dmxR15, and oxidized by the anthrone oxygenase dmxR16 to yield emodin. Emodin is then reduced to emodin hydroquinone by the oxidoreductase dmxR7. A-ring reduction by the short chain dehydrogenase dmxR18, dehydration by the scytalone dehydratase-like protein dmxR17 and probable spontaneous re-oxidation, results in overall deoxygenation to chrysophanol. Baeyer-Villiger oxidation by the Baeyer-Villiger monooxygenase (BVMO) dmxR6 then yields monodictylactone in equilibrium with monodictyphenone. In the case of the cryptosporioptides biosynthesis, monodictylactone is reduced at C-12 to an alcohol (by the short chain dehydrogenases dmxR12 or dmxR8) and hydroxylated at C-5 by dmxR9, yielding the electron-rich aromatic which could eliminate H(2)O to form the ortho-quinonemethide, followed by tautomerisation to paraquinone and complete the formal reduction to produce the 10-methylgroup. Conjugate addition of C-4a-OH to the resulting paraquinone by the monooxygenase dmxR10 then gives cyclohexadienone, which is then reduced at C-5 by the short chain dehydrogenase dmxR3 to give the dihydroxanthone. The 6,7-epoxide in the cryptosporioptides could be introduced by the cytochrome P450 monooxygenase dmxL3. The highly reducing PKS dmxL2 manufactures butyrate, which is further carboxylated by dmxL1 to form ethylmalonate. It is not yet clear whether the carboxylation occurs while the butyrate is attached to the ACP of dmxL2, but this unusual fungal metabolite could then be esterified to O-5 by the O-acetyltransferase dmxR13. Finally, dimerization performed by dmxR5 gives the observed dimers cryptosporioptides A, B and C as the final products of the pathway. This is Baeyer-Villiger monooxygenase dmxR6 from Cryptosporiopsis sp. (strain 8999).